Consider the following 722-residue polypeptide: MPRRRGTPLPTILLLLAFVGGACGTEILSKSRLESCSHDSDAGGRLKCDRKLVVDLAVPSGASGGEASLVARVAGVEEENDTPSATKSIRDPPVITVSKSATYALYALTYLDRDVAYRPDEKYVKTHKCEPYAGAKVVGECERLWDEKGNVIKQTEPICCPCGPHRVQSKCGDIWSKLTKGKANTAHCVRFPGDWFHVFGIGAWSLRFSIRVQVKKGSSVWDVVVGPENKTVVSGDNFLRVKVVGDYTGYTSIPSFEDNYLVTPRKGTGSSQPQDLGNEHSKWMILDRVRFTLDGLECDKIGVGYEAYRNQPNFCSAPYGSCLGNQLWNFWEYDKRRIDNSQLPLYIVEGRFQRINQHPNAGAHTFSVGVTEDLNTNLLIELMADDIEYVYQRSPAKIIDIRVPTFEALSQVGIANVTTKNIGKLESSYSLTFKCSSGISPVEEQLYTMKPDEVIARSFELRSTTDQAAMHQCEAILKASDFSELDREGYRFSTAATVYNNGAQIGPTNDHKKGGFWDSIKALWRNLIDFLTGRLCWTKCPRLFDFGCHIQYVCIGWILLLLLIPAAVVFLWLLHQEGLFDPLYDWWGLEPDDDYRARRRHQKGRHHRHHHDHRHRHGHSHGDHHHHYHGGHHQRRRHHHPPAWDVEGHHHDRQQHSHEAGRNHHRGYGEVVAAGAAPLRLDRASRPGQTEVDAVVEYRERRSRHERHGGHGHRDGHYSPSV.

A signal peptide spans 1-24 (MPRRRGTPLPTILLLLAFVGGACG). Residues 25–552 (TEILSKSRLE…LFDFGCHIQY (528 aa)) lie on the Extracellular side of the membrane. Cystine bridges form between Cys36-Cys48, Cys129-Cys159, Cys141-Cys188, Cys160-Cys315, Cys162-Cys171, Cys298-Cys322, and Cys435-Cys473. Residues 553-573 (VCIGWILLLLLIPAAVVFLWL) form a helical membrane-spanning segment. At 574–722 (LHQEGLFDPL…HRDGHYSPSV (149 aa)) the chain is on the cytoplasmic side. Residues 598 to 641 (RRRHQKGRHHRHHHDHRHRHGHSHGDHHHHYHGGHHQRRRHHHP) are compositionally biased toward basic residues. 2 disordered regions span residues 598-665 (RRRH…RNHH) and 680-722 (RLDR…SPSV). Residues 646 to 662 (VEGHHHDRQQHSHEAGR) are compositionally biased toward basic and acidic residues. Basic residues predominate over residues 701-711 (RRSRHERHGGH). Basic and acidic residues predominate over residues 712–722 (GHRDGHYSPSV).

The protein belongs to the HAP2/GCS1 family.

Its subcellular location is the endoplasmic reticulum membrane. The protein resides in the cell membrane. Its function is as follows. Required for male fertility. Plays a role in pollen tube guidance and successful gamete attachment. Essential for the fusion of gametes during double fertilization, where one male gamete fuses with the egg to produce a zygote, and another male gamete fuses with the central cell to produce the endosperm. Mediates the fusion of cell membranes. Not required for pollen tube outgrowth. The protein is Protein HAPLESS 2-A (HAP2A) of Oryza sativa subsp. japonica (Rice).